Here is a 790-residue protein sequence, read N- to C-terminus: MLTPIPLLQRFFSSPLSIKEILQACDRIGIEAECSNVFPDSLNTVVTGKVLSTSPHPDAERLSVAIVFDGKEERQIICGAPNCRAGIIVPVALPGAKIRNALGEVTTIKKSKIRGLESLGMCCGADELGFPHLQTGERGIFEFPENTPLGESACLLLAGASLECSLTPNLGHCASLLGLAREISFLSDTSLTIPEEFSFSPLPQESHSCDTHNLEASPVFYSVKISGLSWKQSPEDLQASLIALGQKPLNAIVDITNYVMLSLGQPLHAYDSQAVDQKSLHATTVRSPQQLTLLNKETYTLPEGALVVADQHNILGLAGVMGSAASAYSESTTEIILEAAYFLPQAVRKYQRTIQLHTEAAYRFTRGIDPQGVLPALYAAIHMIRALFPEAQISPIQKIGEYKSDPLSLNIRPKTLKRLLDLSLSPSEIAEKLSPLGFQTIAEESSVRVEVPLYRHDIQEETDLVEEICRTTPFVQKTQKILPTYTPIYALKRSLSTFLADSGLQQFFTCSLLDSEIAALSLQESSLIPVQNSSLKLRDSLLSGMLKSAATNLNRQAPYVYAFEIGNVYSKEHNQYREEEHIAILLTRQVMDDSWHVKTPLSFYTIKSWVEKLLCHAGVSIEDFVLQASQHPNFHPYRQAALYHKKQLLGVFGTLHPQLCKKSQIKHDVVFAELSLNVLLSLKKKTEPHYVPYPIYPSSSRDITITIDKDLPADLVRRELLSFESKWLESVHIVSVYQGKDVTSQSKNISLRLVFRDHERTLSGQEIEKEYERLTTLLDKNLANIGKGNS.

Residues 39-154 (PDSLNTVVTG…ENTPLGESAC (116 aa)) form the tRNA-binding domain. Positions 404-483 (SDPLSLNIRP…FVQKTQKILP (80 aa)) constitute a B5 domain. Mg(2+) contacts are provided by aspartate 457, aspartate 463, glutamate 466, and glutamate 467. An FDX-ACB domain is found at 694 to 790 (PIYPSSSRDI…NLANIGKGNS (97 aa)).

Belongs to the phenylalanyl-tRNA synthetase beta subunit family. Type 1 subfamily. In terms of assembly, tetramer of two alpha and two beta subunits. Mg(2+) is required as a cofactor.

Its subcellular location is the cytoplasm. The enzyme catalyses tRNA(Phe) + L-phenylalanine + ATP = L-phenylalanyl-tRNA(Phe) + AMP + diphosphate + H(+). In Chlamydia muridarum (strain MoPn / Nigg), this protein is Phenylalanine--tRNA ligase beta subunit (pheT).